The sequence spans 330 residues: Phosphate acyltransferase (330 aa).

The protein belongs to the PlsX family. Homodimer. Probably interacts with PlsY.

Its subcellular location is the cytoplasm. It catalyses the reaction a fatty acyl-[ACP] + phosphate = an acyl phosphate + holo-[ACP]. Its pathway is lipid metabolism; phospholipid metabolism. Catalyzes the reversible formation of acyl-phosphate (acyl-PO(4)) from acyl-[acyl-carrier-protein] (acyl-ACP). This enzyme utilizes acyl-ACP as fatty acyl donor, but not acyl-CoA. The chain is Phosphate acyltransferase from Streptococcus pneumoniae (strain ATCC 700669 / Spain 23F-1).